A 672-amino-acid polypeptide reads, in one-letter code: Glycogen [starch] synthase (672 aa).

Position 56 (Lys56) interacts with UDP-alpha-D-glucose. A disordered region spans residues 645-672 (MRDNEGKVPSAATSRRPSIHSSDGEDDE). A compositionally biased stretch (polar residues) spans 655–665 (AATSRRPSIHS).

The protein belongs to the glycosyltransferase 3 family. In terms of assembly, forms a hetero-octamer with each protomer of the gsy-1 homotetramer bound to one molecule of gyg-1. The N-terminus is involved in interprotomer contacts with gyg-1. The interaction with gyg-1 is required for glycogen production but is not required for gsy-1 intrinsic activity.

It catalyses the reaction [(1-&gt;4)-alpha-D-glucosyl](n) + UDP-alpha-D-glucose = [(1-&gt;4)-alpha-D-glucosyl](n+1) + UDP + H(+). It participates in glycan biosynthesis; glycogen biosynthesis. Its function is as follows. Transfers the glycosyl residue from UDP-Glc to the non-reducing end of alpha-1,4-glucan. The protein is Glycogen [starch] synthase of Caenorhabditis elegans.